Reading from the N-terminus, the 248-residue chain is Tyrosine recombinase XerD-like (248 aa).

The Core-binding (CB) domain occupies 1-72 (MKSYIEPFIA…TANQFLYYLY (72 aa)). The 164-residue stretch at 85 to 248 (DTMKVMRTEK…PVTLEKYYKS (164 aa)) folds into the Tyr recombinase domain. Active-site residues include Lys-149 and Arg-213. Tyr-245 (O-(3'-phospho-DNA)-tyrosine intermediate) is an active-site residue.

This sequence belongs to the 'phage' integrase family. XerD-like subfamily.

Its subcellular location is the cytoplasm. In terms of biological role, putative tyrosine recombinase. Not involved in the cutting and rejoining of the recombining DNA molecules on dif(SL) site. The sequence is that of Tyrosine recombinase XerD-like from Streptococcus pyogenes serotype M18 (strain MGAS8232).